A 449-amino-acid polypeptide reads, in one-letter code: Uric acid permease PucJ (449 aa).

The next 13 membrane-spanning stretches (helical) occupy residues 11–31, 41–61, 67–87, 91–111, 119–139, 158–178, 191–211, 229–249, 277–297, 313–333, 334–354, 372–392, and 401–421; these read LSLQHVLAMYAGAILVPLLVG, LSYLLAIDLLTCGVATLLQTL, GIGLPVMLGSSFVAVTPMIAI, YGIHAIYGSIIAAGVFIFLFA, VLFPPVVTGTVVTLIGLSLVP, EYGSLENLLLSVGVLVLILVL, VLIGIAAGTAAAAIMGKVSFS, APAFEIGPILTMLIVGIVIIV, AEGIAILIGGLFNAFPYNTFA, IVVTAGCILVCLGLIPKIAAL, ASAVPAAVLGGATVVMFGMVI, LLTIACSIALGIGASTAPGIF, and ILVSDGTITGSLTAIFLNLFF.

Belongs to the nucleobase:cation symporter-2 (NCS2) (TC 2.A.40) family.

The protein localises to the cell membrane. In terms of biological role, uptake of uric acid. This Bacillus subtilis (strain 168) protein is Uric acid permease PucJ (pucJ).